The sequence spans 261 residues: Undecaprenyl-diphosphatase (261 aa).

Helical transmembrane passes span 39–59 (NVLL…LIIF), 76–96 (LLII…KDFF), 99–119 (LFVS…ILWL), 173–193 (AAKF…VLDL), 206–226 (IDLM…YFAV), and 238–258 (LTWF…LQAA).

The protein belongs to the UppP family.

It localises to the cell membrane. The catalysed reaction is di-trans,octa-cis-undecaprenyl diphosphate + H2O = di-trans,octa-cis-undecaprenyl phosphate + phosphate + H(+). In terms of biological role, catalyzes the dephosphorylation of undecaprenyl diphosphate (UPP). Confers resistance to bacitracin. The sequence is that of Undecaprenyl-diphosphatase from Carboxydothermus hydrogenoformans (strain ATCC BAA-161 / DSM 6008 / Z-2901).